A 342-amino-acid polypeptide reads, in one-letter code: Alpha-(1,3)-fucosyltransferase 7 (342 aa).

Over 1-14 (MNNAGHGPTRRLRG) the chain is Cytoplasmic. A helical; Signal-anchor for type II membrane protein membrane pass occupies residues 15–36 (LGVLAGVALLAALWLLWLLGSA). The Lumenal segment spans residues 37–342 (PRGTPAPQPT…YEDLEGWFQA (306 aa)). An intrachain disulfide couples cysteine 68 to cysteine 76. Asparagine 81 is a glycosylation site (N-linked (GlcNAc...) asparagine). The cysteines at positions 211 and 214 are disulfide-linked. N-linked (GlcNAc...) asparagine glycosylation occurs at asparagine 291. Cysteine 318 and cysteine 321 are oxidised to a cystine.

This sequence belongs to the glycosyltransferase 10 family. Post-translationally, N-glycosylated. In terms of tissue distribution, leukocytic/myeloid lineage cells.

It localises to the golgi apparatus. The protein resides in the golgi stack membrane. It carries out the reaction an N-acetyl-alpha-neuraminyl-(2-&gt;3)-beta-D-galactosyl-(1-&gt;4)-N-acetyl-beta-D-glucosaminyl derivative + GDP-beta-L-fucose = an alpha-Neu5Ac-(2-&gt;3)-beta-D-Gal-(1-&gt;4)-[alpha-L-Fuc-(1-&gt;3)]-beta-D-GlcNAc derivative + GDP + H(+). The catalysed reaction is a neolactoside IV(3)-alpha-NeuAc-nLc4Cer + GDP-beta-L-fucose = a neolactoside IV(3)-alpha-NeuNAc,III(3)-alpha-Fuc-nLc4Cer + GDP + H(+). The enzyme catalyses a neolactoside VI(3)-alpha-NeuNAc-nLc6Cer + GDP-beta-L-fucose = a neolactoside VI(3)-alpha-NeuAc,V(3)-alphaFuc-nLc6Cer + GDP + H(+). It catalyses the reaction an alpha-Neu5Ac-(2-&gt;3)-beta-D-Gal-(1-&gt;4)-beta-D-GlcNAc-(1-&gt;3)-beta-D-Gal-(1-&gt;4)-[alpha-L-Fuc-(1-&gt;3)]-beta-D-GlcNAc derivative + GDP-beta-L-fucose = an alpha-Neu5Ac-(2-&gt;3)-beta-D-Gal-(1-&gt;4)-[alpha-L-Fuc-(1-&gt;3)]-beta-D-GlcNAc-(1-&gt;3)-beta-D-Gal-(1-&gt;4)-[alpha-L-Fuc-(1-&gt;3)]-beta-D-GlcNAc derivative + GDP + H(+). It carries out the reaction an alpha-Neu5Ac-(2-&gt;3)-beta-D-Gal-(1-&gt;4)-beta-D-GlcNAc6S derivative + GDP-beta-L-fucose = an alpha-Neu5Ac-(2-&gt;3)-beta-D-Gal-(1-&gt;4)-[alpha-L-Fuc-(1-&gt;3)]-beta-D-GlcNAc6S derivative + GDP + H(+). The catalysed reaction is alpha-Neu5Ac-(2-&gt;3)-beta-D-Gal-(1-&gt;4)-beta-D-GlcNAc-(1-&gt;3)-beta-D-Gal-(1-&gt;4)-D-Glc + GDP-beta-L-fucose = alpha-Neu5Ac-(2-&gt;3)-beta-D-Gal-(1-&gt;4)-[alpha-L-Fuc-(1-&gt;3)]-beta-D-GlcNAc-(1-&gt;3)-beta-D-Gal-(1-&gt;4)-D-Glc + GDP + H(+). The enzyme catalyses alpha-Neu5Ac-(2-&gt;3)-beta-D-Gal-(1-&gt;4)-beta-D-GlcNAc-(1-&gt;3)-beta-D-Gal-(1-&gt;4)-[alpha-L-Fuc-(1-&gt;3)]-beta-D-GlcNAc-(1-&gt;3)-beta-D-Gal-(1-&gt;4)-beta-D-GlcNAc + GDP-beta-L-fucose = alpha-Neu5Ac-(2-&gt;3)-beta-D-Gal-(1-&gt;4)-[alpha-L-Fuc-(1-&gt;3)]-beta-D-GlcNAc-(1-&gt;3)-beta-D-Gal-(1-&gt;4)-[alpha-L-Fuc-(1-&gt;3)]-beta-D-GlcNAc-(1-&gt;3)-beta-D-Gal-(1-&gt;4)-beta-D-GlcNAc + GDP + H(+). It catalyses the reaction alpha-Neu5Ac-(2-&gt;3)-beta-D-Gal-(1-&gt;4)-beta-D-GlcNAc-(1-&gt;3)-beta-D-Gal-(1-&gt;4)-beta-D-GlcNAc-(1-&gt;3)-beta-D-Gal-(1-&gt;4)-beta-D-GlcNAc + GDP-beta-L-fucose = alpha-Neu5Ac-(2-&gt;3)-beta-D-Gal-(1-&gt;4)-[alpha-L-Fuc-(1-&gt;3)]-beta-D-GlcNAc-(1-&gt;3)-beta-D-Gal-(1-&gt;4)-beta-D-GlcNAc-(1-&gt;3)-beta-D-Gal-(1-&gt;4)-beta-D-GlcNAc + GDP + H(+). It participates in protein modification; protein glycosylation. Its activity is regulated as follows. Inhibited by NaCl. Inhibited by GDP in a concentration dependent manner, with an IC(50) value of 93 uM. Also inhibited by GMP and GTP. Inhibited by N-ethylmaleimide. Activated by poly(ethylene glycol) by enhancing the thermal stability of FUT7. Activated by Mn2+, Ca2+, and Mg2+. Both panosialin A and B inhibit activity with IC(50) values of 4.8 and 5.3 ug/ml, respectively. Inhibited by gallic acid (GA) and (-)-epigallocatechin gallate (EGCG) in a time-dependent and irreversible manner with IC(50) values of 60 and 700 nM, respectively. Catalyzes the transfer of L-fucose, from a guanosine diphosphate-beta-L-fucose, to the N-acetyl glucosamine (GlcNAc) of a distal alpha2,3 sialylated lactosamine unit of a glycoprotein or a glycolipid-linked sialopolylactosamines chain through an alpha-1,3 glycosidic linkage and participates in the final fucosylation step in the biosynthesis of the sialyl Lewis X (sLe(x)), a carbohydrate involved in cell and matrix adhesion during leukocyte trafficking and fertilization. In vitro, also synthesizes sialyl-dimeric-Lex structures, from VIM-2 structures and both di-fucosylated and trifucosylated structures from mono-fucosylated precursors. However does not catalyze alpha 1-3 fucosylation when an internal alpha 1-3 fucosylation is present in polylactosamine chain and the fucosylation rate of the internal GlcNAc residues is reduced once fucose has been added to the distal GlcNAc. Also catalyzes the transfer of a fucose from GDP-beta-fucose to the 6-sulfated a(2,3)sialylated substrate to produce 6-sulfo sLex mediating significant L-selectin-dependent cell adhesion. Through sialyl-Lewis(x) biosynthesis, can control SELE- and SELP-mediated cell adhesion with leukocytes and allows leukocytes tethering and rolling along the endothelial tissue thereby enabling the leukocytes to accumulate at a site of inflammation. May enhance embryo implantation through sialyl Lewis X (sLeX)-mediated adhesion of embryo cells to endometrium. May affect insulin signaling by up-regulating the phosphorylation and expression of some signaling molecules involved in the insulin-signaling pathway through SLe(x) which is present on the glycans of the INSRR alpha subunit. In Homo sapiens (Human), this protein is Alpha-(1,3)-fucosyltransferase 7.